We begin with the raw amino-acid sequence, 92 residues long: Cell division topological specificity factor (92 aa).

The protein belongs to the MinE family.

Prevents the cell division inhibition by proteins MinC and MinD at internal division sites while permitting inhibition at polar sites. This ensures cell division at the proper site by restricting the formation of a division septum at the midpoint of the long axis of the cell. This is Cell division topological specificity factor from Gluconobacter oxydans (strain 621H) (Gluconobacter suboxydans).